A 564-amino-acid chain; its full sequence is MAIAEEEAALIEDSVSDSVDHRGLPAGKSSTGGWRSAWYIIGVEVGERFAYFGIGSNLITYLTGPLGQSTATAAVNVNTWSGTASILPVLGAFIADAYLGRYRTIVVASLIYILGLGLLTLSSILILMGLSEQRQHNRNASAKPFFWVNILFFCSLYLVAIGQGGHKPCVQAFGADQFDVGDPKERISRGSFFNWWFLSLSAGITLSIIVVVYVQDNVNWALGFGIPCLFMVMALALFLFGRKTYRYPRGDREGKNNAFARIGRVFLVAFKNRKLKLTHSGQLEVGSYKKCKGQLEFLAKALLPGEGGVEPCSSRDVEDAMALVRLIPIWITSVVSTIPYAQYATFFTKQGVTVDRKILPGFEIPPASFQALIGLSIFISVPTYERVFLPLARLITKKPSGITMLQRIGAGMVLSSLNMVVAALVEMKRLETAKEHGLVDRPDATIPMSIWWFVPQYLLLGMIDVFSLVGTQEFFYDQVPTELRSIGLALSLSAMGLASFLSGFLITVINWATGKNGGDSWFNTNLNRAHVDYFYWLLAAFTAIGFLAFLLLSRLYVYRRVDQV.

2 helical membrane passes run 49–69 (FAYF…LGQS) and 80–100 (WSGT…AYLG). Phosphothreonine is present on Thr-104. 10 helical membrane-spanning segments follow: residues 110-130 (LIYI…LMGL), 145-165 (FFWV…GQGG), 192-212 (FFNW…IVVV), 220-240 (WALG…LFLF), 327-347 (IPIW…ATFF), 358-378 (ILPG…LSIF), 408-428 (IGAG…VEMK), 450-470 (IWWF…SLVG), 486-506 (IGLA…GFLI), and 533-553 (YFYW…LLLS).

Belongs to the major facilitator superfamily. Proton-dependent oligopeptide transporter (POT/PTR) (TC 2.A.17) family. Expressed in shoots and roots.

It localises to the membrane. In Arabidopsis thaliana (Mouse-ear cress), this protein is Protein NRT1/ PTR FAMILY 5.16 (NPF5.16).